We begin with the raw amino-acid sequence, 240 residues long: Dihydromonapterin reductase (240 aa).

Tyr152 (proton acceptor) is an active-site residue.

This sequence belongs to the short-chain dehydrogenases/reductases (SDR) family. FolM subfamily.

The enzyme catalyses (6S)-5,6,7,8-tetrahydrofolate + NADP(+) = 7,8-dihydrofolate + NADPH + H(+). The catalysed reaction is 7,8-dihydromonapterin + NADPH + H(+) = 5,6,7,8-tetrahydromonapterin + NADP(+). Functionally, catalyzes the reduction of dihydromonapterin to tetrahydromonapterin. Also has lower activity with dihydrofolate. The polypeptide is Dihydromonapterin reductase (folM) (Escherichia coli O6:K15:H31 (strain 536 / UPEC)).